Consider the following 242-residue polypeptide: Lactate utilization protein A 1 (242 aa).

This sequence belongs to the LutA/YkgE family.

Is involved in L-lactate degradation and allows cells to grow with lactate as the sole carbon source. In Bacillus anthracis (strain CDC 684 / NRRL 3495), this protein is Lactate utilization protein A 1.